The sequence spans 434 residues: Putative ZDHHC-type palmitoyltransferase 1 (434 aa).

A run of 2 helical transmembrane segments spans residues 25 to 45 (AYFI…LIFV) and 53 to 73 (ITAA…IFLI). The DHHC domain maps to 115–165 (KWCETCCLYRPPRANHCGICNNCVERFDHHCPWVGNCIGRRNYQTFLYFLY). Cys145 functions as the S-palmitoyl cysteine intermediate in the catalytic mechanism. Residues 160–180 (FLYFLYSLGFLCIWIMGFCVA) form a helical membrane-spanning segment. N-linked (GlcNAc...) asparagine glycosylation is found at Asn207, Asn216, Asn274, Asn346, Asn362, Asn373, Asn381, Asn387, and Asn393. A disordered region spans residues 262–330 (TIPTPNNING…ISPPQMLQRQ (69 aa)). Residues 267-316 (NNINGNNNNSINNNNNNNNNNNNNNNNNNNNNNNNNNINNGNSGGTTNNG) are compositionally biased toward low complexity. The segment at 365 to 434 (TISEDKPKNL…SLNHELQVNV (70 aa)) is disordered. The segment covering 373–387 (NLSNSNNNNNTNNKN) has biased composition (low complexity). Positions 409-419 (DDFKSDNDKEI) are enriched in basic and acidic residues. The N-linked (GlcNAc...) asparagine glycan is linked to Asn420. Residues 420-434 (NSSSLSLNHELQVNV) are compositionally biased toward polar residues.

The protein belongs to the DHHC palmitoyltransferase family.

It localises to the membrane. It carries out the reaction L-cysteinyl-[protein] + hexadecanoyl-CoA = S-hexadecanoyl-L-cysteinyl-[protein] + CoA. The chain is Putative ZDHHC-type palmitoyltransferase 1 from Dictyostelium discoideum (Social amoeba).